Here is a 163-residue protein sequence, read N- to C-terminus: Nucleotide-binding protein SACE_6882 (163 aa).

This sequence belongs to the YajQ family.

Nucleotide-binding protein. This Saccharopolyspora erythraea (strain ATCC 11635 / DSM 40517 / JCM 4748 / NBRC 13426 / NCIMB 8594 / NRRL 2338) protein is Nucleotide-binding protein SACE_6882.